The chain runs to 750 residues: Amyloid-beta A4 precursor protein-binding family A member 2 (750 aa).

Disordered stretches follow at residues methionine 1–glutamate 94 and aspartate 143–threonine 346. Position 11 is a phosphoserine (serine 11). Residues glycine 70–threonine 80 show a composition bias toward polar residues. The segment covering serine 81–glutamate 94 has biased composition (acidic residues). Residues histidine 185 to threonine 271 are STXBP1-binding. Residue serine 209 is modified to Phosphoserine. Acidic residues predominate over residues aspartate 219–aspartate 228. 2 stretches are compositionally biased toward polar residues: residues leucine 238–glutamate 248 and serine 332–proline 344. Residues leucine 367–aspartate 556 form the PID domain. PDZ domains follow at residues glutamate 569–serine 654 and threonine 660–alanine 736.

In terms of assembly, part of a multimeric complex containing STXBP1 and syntaxin-1. Binds to the cytoplasmic domain of amyloid-beta protein, and to the nuclear factor NF-kappa-B/p65 via its PDZ domain. Interacts with the N-terminal domain of NECAB3. In terms of tissue distribution, specifically expressed in neurons, predominantly of the cerebellum, hippocampus, and spinal cord. Lesser extent in neurons of the cerebral cortex and anterior thalmic nuclei.

Functionally, putative function in synaptic vesicle exocytosis by binding to STXBP1, an essential component of the synaptic vesicle exocytotic machinery. May modulate processing of the amyloid-beta precursor protein (APP) and hence formation of APP-beta. The polypeptide is Amyloid-beta A4 precursor protein-binding family A member 2 (Apba2) (Mus musculus (Mouse)).